Reading from the N-terminus, the 402-residue chain is Beta-ketoacyl-[acyl-carrier-protein] synthase III B, chloroplastic (402 aa).

Catalysis depends on residues Cys-178, His-328, and Asn-358.

It belongs to the thiolase-like superfamily. FabH family.

The protein localises to the plastid. The protein resides in the chloroplast. It catalyses the reaction malonyl-[ACP] + acetyl-CoA + H(+) = 3-oxobutanoyl-[ACP] + CO2 + CoA. It functions in the pathway lipid metabolism; fatty acid biosynthesis. Its function is as follows. Catalyzes the condensation reaction of fatty acid synthesis by the addition to an acyl acceptor of two carbons from malonyl-ACP. KAS III catalyzes the first condensation reaction which initiates fatty acid synthesis and may therefore play a role in governing the total rate of fatty acid production. Possesses both acetoacetyl-ACP synthase and acetyl transacylase activities. This Cuphea wrightii (Wright's waxweed) protein is Beta-ketoacyl-[acyl-carrier-protein] synthase III B, chloroplastic (KAS3B).